The sequence spans 406 residues: 2,3-bisphosphoglycerate-independent phosphoglycerate mutase (406 aa).

Residues 156–165 show a composition bias toward basic and acidic residues; it reads ITEGDPHKEG. The tract at residues 156 to 177 is disordered; sequence ITEGDPHKEGVPIPEVKPLDNS.

It belongs to the BPG-independent phosphoglycerate mutase family. A-PGAM subfamily.

The catalysed reaction is (2R)-2-phosphoglycerate = (2R)-3-phosphoglycerate. Its pathway is carbohydrate degradation; glycolysis; pyruvate from D-glyceraldehyde 3-phosphate: step 3/5. In terms of biological role, catalyzes the interconversion of 2-phosphoglycerate and 3-phosphoglycerate. In Methanococcus aeolicus (strain ATCC BAA-1280 / DSM 17508 / OCM 812 / Nankai-3), this protein is 2,3-bisphosphoglycerate-independent phosphoglycerate mutase.